The following is a 147-amino-acid chain: Sentan (147 aa).

Residues M1 to R32 form a disordered region. Positions T8–G17 are enriched in basic and acidic residues.

Belongs to the S-100 family.

It localises to the cell projection. It is found in the cilium. Functionally, may be a component of the linker structure that bridges the ciliary membrane and peripheral singlet microtubules. The protein is Sentan (SNTN) of Homo sapiens (Human).